Consider the following 350-residue polypeptide: D-guloside 3-dehydrogenase (350 aa).

The protein belongs to the zinc-containing alcohol dehydrogenase family. It depends on Zn(2+) as a cofactor.

The enzyme catalyses a D-guloside + NAD(+) = a 3-dehydro-D-guloside + NADH + H(+). Functionally, catalyzes the NAD(+)-dependent oxidation of the hydroxyl group at C3 of D-gulosides leading to 3-dehydro-D-gulosides. Probably functions in a metabolic pathway that transforms D-gulosides to D-glucosides. Is also able to catalyze the reverse reactions, i.e. the NADH-dependent reduction of the oxo group at C3 of 3-dehydro-D-gulosides leading to D-gulosides. In vitro, can oxidize D-gulose and methyl beta-D-guloside, and reduce methyl alpha-3-dehydro-D-guloside and methyl beta-3-dehydro-D-guloside. However, the actual specific physiological substrates for this metabolic pathway are unknown. The protein is D-guloside 3-dehydrogenase (ycjQ) of Escherichia coli (strain K12).